The following is a 1300-amino-acid chain: DNA-directed RNA polymerase subunit beta (1300 aa).

The protein belongs to the RNA polymerase beta chain family. In terms of assembly, the RNAP catalytic core consists of 2 alpha, 1 beta, 1 beta' and 1 omega subunit. When a sigma factor is associated with the core the holoenzyme is formed, which can initiate transcription.

It catalyses the reaction RNA(n) + a ribonucleoside 5'-triphosphate = RNA(n+1) + diphosphate. Its function is as follows. DNA-dependent RNA polymerase catalyzes the transcription of DNA into RNA using the four ribonucleoside triphosphates as substrates. In Chlorobium chlorochromatii (strain CaD3), this protein is DNA-directed RNA polymerase subunit beta.